Here is a 1028-residue protein sequence, read N- to C-terminus: Formin-like protein 3 (1028 aa).

The N-myristoyl glycine moiety is linked to residue glycine 2. Positions methionine 26–glutamate 472 constitute a GBD/FH3 domain. A Phosphothreonine modification is found at threonine 95. At serine 174 the chain carries Phosphoserine. Positions glutamate 493–proline 541 are disordered. The segment covering proline 508–proline 541 has biased composition (pro residues). The FH2 domain maps to isoleucine 561–alanine 951. The DAD domain maps to tyrosine 986 to cysteine 1018. Serine 1014 carries the post-translational modification Phosphoserine.

It belongs to the formin homology family. Interacts with SRGAP2 (via SH3 domain). As to expression, expressed in endothelial cells.

The protein resides in the cytoplasm. It is found in the cell membrane. Functionally, plays a role in the regulation of cell morphology and cytoskeletal organization. Required in the control of cell shape and migration. Required for developmental angiogenesis. In this process, required for microtubule reorganization and for efficient endothelial cell elongation. In quiescent endothelial cells, triggers rearrangement of the actin cytoskeleton, but does not alter microtubule alignement. The sequence is that of Formin-like protein 3 (FMNL3) from Homo sapiens (Human).